The chain runs to 427 residues: Adenylosuccinate synthetase (427 aa).

GTP contacts are provided by residues 12-18 and 40-42; these read GDEGKGK and GHT. Asp13 functions as the Proton acceptor in the catalytic mechanism. 2 residues coordinate Mg(2+): Asp13 and Gly40. Residues 13-16, 38-41, Thr128, Arg142, Gln223, Thr238, and Arg302 each bind IMP; these read DEGK and NAGH. The active-site Proton donor is the His41. 298–304 serves as a coordination point for substrate; that stretch reads VTTGRDR. Residues Arg304, 330–332, and 412–414 contribute to the GTP site; these read KLD and GVG.

This sequence belongs to the adenylosuccinate synthetase family. As to quaternary structure, homodimer. It depends on Mg(2+) as a cofactor.

Its subcellular location is the cytoplasm. It catalyses the reaction IMP + L-aspartate + GTP = N(6)-(1,2-dicarboxyethyl)-AMP + GDP + phosphate + 2 H(+). It functions in the pathway purine metabolism; AMP biosynthesis via de novo pathway; AMP from IMP: step 1/2. In terms of biological role, plays an important role in the de novo pathway of purine nucleotide biosynthesis. Catalyzes the first committed step in the biosynthesis of AMP from IMP. The sequence is that of Adenylosuccinate synthetase from Streptomyces griseus subsp. griseus (strain JCM 4626 / CBS 651.72 / NBRC 13350 / KCC S-0626 / ISP 5235).